The primary structure comprises 51 residues: MSRNKPVAKKFRLAKALKANSPIPIWIVLKTRGRVRYNPLRRNWRRNDLKV.

It belongs to the eukaryotic ribosomal protein eL39 family.

The sequence is that of Large ribosomal subunit protein eL39 from Saccharolobus islandicus (strain L.S.2.15 / Lassen #1) (Sulfolobus islandicus).